Here is a 354-residue protein sequence, read N- to C-terminus: Isopentenyl-diphosphate delta-isomerase (354 aa).

11–12 (KK) contributes to the substrate binding site. Residues serine 67, 68–70 (SMT), serine 98, and asparagine 126 each bind FMN. 98-100 (SFK) is a binding site for substrate. Glutamine 160 lines the substrate pocket. Position 161 (glutamate 161) interacts with Mg(2+). Residues lysine 192, threonine 222, and 289–290 (AA) contribute to the FMN site.

The protein belongs to the IPP isomerase type 2 family. As to quaternary structure, homooctamer. Dimer of tetramers. FMN serves as cofactor. It depends on NADPH as a cofactor. The cofactor is Mg(2+).

Its subcellular location is the cytoplasm. The enzyme catalyses isopentenyl diphosphate = dimethylallyl diphosphate. Functionally, involved in the biosynthesis of isoprenoids. Catalyzes the 1,3-allylic rearrangement of the homoallylic substrate isopentenyl (IPP) to its allylic isomer, dimethylallyl diphosphate (DMAPP). The chain is Isopentenyl-diphosphate delta-isomerase from Borrelia garinii subsp. bavariensis (strain ATCC BAA-2496 / DSM 23469 / PBi) (Borreliella bavariensis).